The primary structure comprises 639 residues: MAU2 chromatid cohesion factor homolog (639 aa).

TPR repeat units follow at residues 453 to 486 and 493 to 526; these read GGFY…ANAE and SCSL…ASKI.

It belongs to the SCC4/mau-2 family. In terms of assembly, interacts with Nipped-B to form the cohesin loading complex.

The protein resides in the nucleus. The protein localises to the nucleoplasm. In terms of biological role, required for association of the cohesin complex with chromatin during interphase. Plays a role in sister chromatid cohesion and normal progression through prometaphase. The sequence is that of MAU2 chromatid cohesion factor homolog from Drosophila ananassae (Fruit fly).